The following is a 129-amino-acid chain: Small ribosomal subunit protein uS11 (129 aa).

It belongs to the universal ribosomal protein uS11 family. Part of the 30S ribosomal subunit. Interacts with proteins S7 and S18. Binds to IF-3.

Functionally, located on the platform of the 30S subunit, it bridges several disparate RNA helices of the 16S rRNA. Forms part of the Shine-Dalgarno cleft in the 70S ribosome. The polypeptide is Small ribosomal subunit protein uS11 (Rhizorhabdus wittichii (strain DSM 6014 / CCUG 31198 / JCM 15750 / NBRC 105917 / EY 4224 / RW1) (Sphingomonas wittichii)).